We begin with the raw amino-acid sequence, 305 residues long: Homoserine O-acetyltransferase (305 aa).

Cys142 functions as the Acyl-thioester intermediate in the catalytic mechanism. 2 residues coordinate substrate: Lys163 and Ser192. The active-site Proton acceptor is the His235. The active site involves Glu237. Arg249 lines the substrate pocket.

The protein belongs to the MetA family.

Its subcellular location is the cytoplasm. It catalyses the reaction L-homoserine + acetyl-CoA = O-acetyl-L-homoserine + CoA. The protein operates within amino-acid biosynthesis; L-methionine biosynthesis via de novo pathway; O-acetyl-L-homoserine from L-homoserine: step 1/1. Functionally, transfers an acetyl group from acetyl-CoA to L-homoserine, forming acetyl-L-homoserine. The polypeptide is Homoserine O-acetyltransferase (Bacteroides thetaiotaomicron (strain ATCC 29148 / DSM 2079 / JCM 5827 / CCUG 10774 / NCTC 10582 / VPI-5482 / E50)).